A 67-amino-acid chain; its full sequence is Large ribosomal subunit protein bL35 (67 aa).

The protein belongs to the bacterial ribosomal protein bL35 family.

The chain is Large ribosomal subunit protein bL35 from Agrobacterium fabrum (strain C58 / ATCC 33970) (Agrobacterium tumefaciens (strain C58)).